We begin with the raw amino-acid sequence, 116 residues long: NAD(P)H-quinone oxidoreductase subunit M (116 aa).

It belongs to the complex I NdhM subunit family. NDH-1 can be composed of about 15 different subunits; different subcomplexes with different compositions have been identified which probably have different functions.

It localises to the cellular thylakoid membrane. It carries out the reaction a plastoquinone + NADH + (n+1) H(+)(in) = a plastoquinol + NAD(+) + n H(+)(out). It catalyses the reaction a plastoquinone + NADPH + (n+1) H(+)(in) = a plastoquinol + NADP(+) + n H(+)(out). Functionally, NDH-1 shuttles electrons from an unknown electron donor, via FMN and iron-sulfur (Fe-S) centers, to quinones in the respiratory and/or the photosynthetic chain. The immediate electron acceptor for the enzyme in this species is believed to be plastoquinone. Couples the redox reaction to proton translocation, and thus conserves the redox energy in a proton gradient. Cyanobacterial NDH-1 also plays a role in inorganic carbon-concentration. The polypeptide is NAD(P)H-quinone oxidoreductase subunit M (Synechococcus sp. (strain RCC307)).